The primary structure comprises 817 residues: Dual specificity tyrosine-phosphorylation-regulated kinase mbk-2 (817 aa).

Disordered stretches follow at residues 1 to 46 (MAAL…HECP), 70 to 148 (PTSF…GPLG), 186 to 206 (GSYEFPSGQAQQQRRLGGSQQ), and 301 to 396 (LPNV…FRPE). Over residues 7–25 (FTRNSRSYGQQPIDVTQQG) the composition is skewed to polar residues. Low complexity-rich tracts occupy residues 70–81 (PTSFSGASSSSS) and 97–111 (NLLGSSQNSASSNSL). 2 stretches are compositionally biased toward polar residues: residues 122-143 (SGNTLTRSYHQPSSTNSSTNNL) and 193-206 (GQAQQQRRLGGSQQ). Residues 303-318 (NVGTSSSNGSSNSSSG) are compositionally biased toward low complexity. A compositionally biased stretch (polar residues) spans 327 to 351 (LMTQSIGGPNKHLSASHSTLNTAST). Ser362 bears the Phosphoserine; by cdk-1 mark. Residues 364-392 (SNESLSRSHTSSSGGSQGGHNSNSGSNSG) are compositionally biased toward low complexity. Residues 461-774 (YEVLKVIGKG…PAQALKHKWL (314 aa)) enclose the Protein kinase domain. ATP contacts are provided by residues 467–475 (IGKGSFGQV) and Lys490. Asp587 (proton acceptor) is an active-site residue. Tyr621 is subject to Phosphotyrosine; by autocatalysis.

Belongs to the protein kinase superfamily. CMGC Ser/Thr protein kinase family. MNB/DYRK subfamily. Part of a complex, consisting of pseudophosphatases egg-3, egg-4, egg-5 and kinase mbk-2; this complex is required for the oocyte-to-zygote transition. Interacts (via Tyr-619 and Tyr-621) with egg-4 (via tyrosine-protein phosphatase domain) and egg-5 (via tyrosine-protein phosphatase domain); mbk-2 tyrosine phosphorylation enhances the interaction. The interaction inhibits mbk-2 kinase activity and is required for mbk-2 oocyte cortex localization. Interacts (via N-terminus) with egg-3 (via tyrosine-protein phosphatase domain); the interaction does not affect mbk-2 kinase activity, is enhanced by mbk-2 tyrosine phosphorylation status and requires prior binding of mbk-2 to egg-4 and egg-5. Mg(2+) is required as a cofactor. Autophosphorylated. As to expression, in L1 larvae, expressed widely in the nervous system, including head neurons and the ventral nerve cord. In adult animals, continues to be expressed in the nervous system and is also expressed in body wall muscle.

It is found in the cytoplasm. The protein resides in the cell cortex. It carries out the reaction L-seryl-[protein] + ATP = O-phospho-L-seryl-[protein] + ADP + H(+). The enzyme catalyses L-threonyl-[protein] + ATP = O-phospho-L-threonyl-[protein] + ADP + H(+). The catalysed reaction is L-tyrosyl-[protein] + ATP = O-phospho-L-tyrosyl-[protein] + ADP + H(+). With respect to regulation, activated during oocyte maturation by phosphorylation on Ser-362 by cdk-1. The pseudotyrosine phosphatases egg-4 and egg-5 sequester activated mbk-2 until the meiotic divisions and inhibit mbk-2 kinase activity directly, using a mixed-inhibition mechanism that does not involve tyrosine dephosphorylation. Functionally, required for oocyte-to-zygote transition in which it phosphorylates oocyte proteins, including mei-1, oma-1, oma-2, mex-5, and mex-6, modifying their activity and/or stability following meiosis. Through phosphorylation of P granule components including meg-1, promotes the disassembly of zygotic P granules in the anterior cytoplasm during zygote polarization, and thus plays a role in P granule distribution and segregation in early stage embryos following meiosis. Functions in both spindle positioning and in the posterior localization of cytoplasmic determinants, including pie-1, pos-1, and pgl-1, in early embryos. Involved in the asymmetric distribution of plk-1 at the 2-cell embryonic stage. The polypeptide is Dual specificity tyrosine-phosphorylation-regulated kinase mbk-2 (Caenorhabditis elegans).